Consider the following 567-residue polypeptide: Hexose transporter HXT16 (567 aa).

The span at Met-1–Ala-19 shows a compositional bias: polar residues. Positions Met-1–Trp-32 are disordered. At Met-1 to Leu-55 the chain is on the cytoplasmic side. Residues Gly-56–Trp-76 form a helical membrane-spanning segment. Residues Asp-77–Gly-112 lie on the Extracellular side of the membrane. A helical transmembrane segment spans residues Leu-113 to Ala-133. Residues Asp-134–Arg-139 lie on the Cytoplasmic side of the membrane. A helical membrane pass occupies residues Leu-140–Asn-160. Residues His-161–Lys-170 lie on the Extracellular side of the membrane. A helical membrane pass occupies residues Ile-171–Ile-191. The Cytoplasmic segment spans residues Ala-192–Arg-197. A helical transmembrane segment spans residues Gly-198 to Ser-218. Topologically, residues Val-219–Arg-232 are extracellular. The chain crosses the membrane as a helical span at residues Ile-233–Pro-253. The Cytoplasmic portion of the chain corresponds to Glu-254–Glu-336. A helical transmembrane segment spans residues Asn-337–Thr-353. Topologically, residues Asp-354–Ser-359 are extracellular. A helical membrane pass occupies residues Ile-360 to Val-377. The Cytoplasmic portion of the chain corresponds to Asp-378 to Lys-384. Residues Cys-385 to Val-405 form a helical membrane-spanning segment. Residues Lys-406–Val-427 are Extracellular-facing. A helical membrane pass occupies residues Phe-428–Val-448. Residues Ala-449 to Thr-465 are Cytoplasmic-facing. A helical transmembrane segment spans residues Ala-466–Ile-486. A topological domain (extracellular) is located at residue His-487. The chain crosses the membrane as a helical span at residues Phe-488 to Phe-508. Residues Leu-509–Asn-567 lie on the Cytoplasmic side of the membrane. Positions Ser-533–Ser-555 are disordered. The segment covering Ser-545–Ser-555 has biased composition (basic and acidic residues).

The protein belongs to the major facilitator superfamily. Sugar transporter (TC 2.A.1.1) family.

It localises to the membrane. Functionally, probable glucose transporter. In Saccharomyces cerevisiae (strain ATCC 204508 / S288c) (Baker's yeast), this protein is Hexose transporter HXT16 (HXT16).